The chain runs to 66 residues: Beta-mammal toxin Co2 (66 aa).

The 66-residue stretch at 1-66 (KEGYIVNYHD…VWPLPKKRCN (66 aa)) folds into the LCN-type CS-alpha/beta domain. 4 cysteine pairs are disulfide-bonded: Cys-12/Cys-65, Cys-16/Cys-41, Cys-25/Cys-46, and Cys-29/Cys-48.

Expressed by the venom gland.

It is found in the secreted. Functionally, beta toxins bind voltage-independently at site-4 of sodium channels (Nav) and shift the voltage of activation toward more negative potentials thereby affecting sodium channel activation and promoting spontaneous and repetitive firing. This toxin acts on human Nav1.1/SCN1A, Nav1.2/SCN2A, Nav1.4/SCN4A and Nav1.6/SCN8A voltage-gated sodium channels. Also, it reduces the peak of sodium currents in Nav1.5/SCN5A at all potentials. In vivo, is lethal to mice when intraperitoneally injected at a dose of 5ug. No activity is observed when injected into crickets or woodlice. The chain is Beta-mammal toxin Co2 from Centruroides ornatus (Scorpion).